Here is a 221-residue protein sequence, read N- to C-terminus: Putative NAD(P)H nitroreductase YfkO (221 aa).

FMN is bound by residues 15–17 and 73–75; these read RHA and QKQ. Position 157–162 (157–162) interacts with NAD(+); that stretch reads AAAQIG. Residues 169–170 and Arg-211 each bind FMN; that span reads EG.

It belongs to the nitroreductase family. In terms of assembly, monomer. It depends on FMN as a cofactor.

This is Putative NAD(P)H nitroreductase YfkO (yfkO) from Bacillus subtilis (strain 168).